The following is a 196-amino-acid chain: tRNA (pseudouridine(54)-N(1))-methyltransferase (196 aa).

Position 126 (leucine 126) interacts with S-adenosyl-L-methionine.

This sequence belongs to the methyltransferase superfamily. TrmY family. In terms of assembly, homodimer.

Its subcellular location is the cytoplasm. It catalyses the reaction pseudouridine(54) in tRNA + S-adenosyl-L-methionine = N(1)-methylpseudouridine(54) in tRNA + S-adenosyl-L-homocysteine + H(+). Specifically catalyzes the N1-methylation of pseudouridine at position 54 (Psi54) in tRNAs. In Halobacterium salinarum (strain ATCC 700922 / JCM 11081 / NRC-1) (Halobacterium halobium), this protein is tRNA (pseudouridine(54)-N(1))-methyltransferase.